We begin with the raw amino-acid sequence, 110 residues long: U1-lycotoxin-Ls1cc (110 aa).

The signal sequence occupies residues 1-20 (MKFVLLFGVLLVTLFSYSSA). A propeptide spanning residues 21-44 (EMLDDFDQADEDELLSLIEKEEAR) is cleaved from the precursor. Intrachain disulfides connect cysteine 47–cysteine 62, cysteine 54–cysteine 71, cysteine 61–cysteine 89, and cysteine 73–cysteine 87.

This sequence belongs to the neurotoxin 19 (CSTX) family. 03 subfamily. Expressed by the venom gland.

The protein localises to the secreted. The protein is U1-lycotoxin-Ls1cc of Lycosa singoriensis (Wolf spider).